The following is a 345-amino-acid chain: Very-long-chain 3-oxoacyl-CoA reductase (345 aa).

The chain crosses the membrane as a helical span at residues 26 to 46 (GAAVLLTTGTLFIASRVLTFV). Residues Val71, Asp125, Asp133, Asn152, Tyr219, Lys223, Ile252, and Ser254 each contribute to the NADP(+) site. Catalysis depends on Tyr219, which acts as the Proton donor. Lys223 serves as the catalytic Lowers pKa of active site Tyr.

The protein belongs to the short-chain dehydrogenases/reductases (SDR) family.

The protein resides in the endoplasmic reticulum membrane. The enzyme catalyses a very-long-chain (3R)-3-hydroxyacyl-CoA + NADP(+) = a very-long-chain 3-oxoacyl-CoA + NADPH + H(+). It participates in lipid metabolism; fatty acid biosynthesis. Its function is as follows. Component of the microsomal membrane bound fatty acid elongation system, which produces the 26-carbon very long-chain fatty acids (VLCFA) from palmitate. Catalyzes the reduction of the 3-ketoacyl-CoA intermediate that is formed in each cycle of fatty acid elongation. VLCFAs serve as precursors for ceramide and sphingolipids. The sequence is that of Very-long-chain 3-oxoacyl-CoA reductase from Aspergillus fumigatus (strain CBS 144.89 / FGSC A1163 / CEA10) (Neosartorya fumigata).